The sequence spans 227 residues: Translation initiation factor 6 (227 aa).

Belongs to the eIF-6 family.

Functionally, binds to the 50S ribosomal subunit and prevents its association with the 30S ribosomal subunit to form the 70S initiation complex. This is Translation initiation factor 6 from Pyrococcus horikoshii (strain ATCC 700860 / DSM 12428 / JCM 9974 / NBRC 100139 / OT-3).